We begin with the raw amino-acid sequence, 133 residues long: Carbohydrate-binding protein AWN (133 aa).

Position 1 is an N-acetylalanine (alanine 1). 2 disulfide bridges follow: cysteine 9/cysteine 30 and cysteine 53/cysteine 74. The region spanning 9-110 (CGGVLRDPPG…SPFHIYYYAD (102 aa)) is the CUB domain. Residues 73–110 (ICGGISLVFRSSSNIATIKYLRTSGQRASPFHIYYYAD) are heparin-binding.

The protein belongs to the spermadhesin family.

The protein resides in the secreted. Its function is as follows. Mediates the binding of spermatozoa to component(s) of the egg's zona pellucida by a carbohydrate-binding mechanism. It is a secretory component of the male accessory glands being coated to the sperm surface at the time of ejaculation. This chain is Carbohydrate-binding protein AWN, found in Equus caballus (Horse).